Reading from the N-terminus, the 528-residue chain is Phosphoenolpyruvate carboxykinase (ATP) (528 aa).

The substrate site is built by arginine 56, tyrosine 192, and lysine 198. ATP-binding positions include lysine 198, histidine 217, and 233–241 (GLSGTGKTT). Mn(2+) is bound by residues lysine 198 and histidine 217. Aspartate 254 contributes to the Mn(2+) binding site. ATP-binding residues include glutamate 282, arginine 319, and threonine 444. Residue arginine 319 participates in substrate binding.

Belongs to the phosphoenolpyruvate carboxykinase (ATP) family. Mn(2+) serves as cofactor.

The protein localises to the cytoplasm. It carries out the reaction oxaloacetate + ATP = phosphoenolpyruvate + ADP + CO2. It functions in the pathway carbohydrate biosynthesis; gluconeogenesis. Involved in the gluconeogenesis. Catalyzes the conversion of oxaloacetate (OAA) to phosphoenolpyruvate (PEP) through direct phosphoryl transfer between the nucleoside triphosphate and OAA. The polypeptide is Phosphoenolpyruvate carboxykinase (ATP) (Bacillus cytotoxicus (strain DSM 22905 / CIP 110041 / 391-98 / NVH 391-98)).